A 1072-amino-acid polypeptide reads, in one-letter code: MLGDGKEGTSTIPGFNQIQFEGFYRFIDQGLIEELSKFPKIEDIDHEIEFQLFMETYQLVEPLIKERDAVYESLTYSSELYVSAGLIWKTSRNMQEQRIFIGNIPLMNSLGTSIVNGIYRIVINQILQSPGIYYQSELDHNGISVYTGTIISDWGGRLELEIDKKARIWARVSRKQKISILVLSSAMGSNLREILENVCYPEIFLSFLTDKEKKKIGSKENAILEFYQQFSCVGGDPIFSESLCKELQKKFFHQRCELGRIGRRNINWRLNLNIPQNNIFLLPRDILAAADHLIGMKFGMGTLDDMNHLKNKRIRSVADLLQDQLGLALARLENVVKGTISGAIRHKLIPTPQNLVTSTPLTTTYESFFGLHPLSQVLDRTNPLTQIVHGRKLSYLGPGGLTGRTANFRIRDIHPSHYGRICPIDTSEGINVGLIGSLSIHARIGDWGSLESPFYELFEKSKKARIRMLFLSPSQDEYYMIAAGNSLALNRGIQEEQAVPARYRQEFLTIAWEEVHLRSIFPFQYFSIGASLIPFIEHNDANRALMSSNMQRQAVPLSRSEKCIVGTGLERQVALDSGVPAIAEHEGKILYTDTEKIVFSGNGDTLSIPLIMYERSNKNTCMHQKPQVRRGKCIKKGQILADGAATVGGELALGKNILVAYMPWEGYNFEDAVLISECLVYGDIYTSFHIRKYEIQTHVTTQGPERITKEIPHLEGRLLRNLDKNGIVMLGSWVETGDILVGKLTPQVAKESSYAPEDRLLRAILGIQVSTSKETCLKLPIGGRGRVIDVRWVQKKGGSSYNPEIIRVYISQKREIKVGDKVAGRHGNKGIISKILPRQDMPYLQDGRPVDMVFNPLGVPSRMNVGQIFECSLGLAGSLLDRHYRIAPFDERYEQEASRKLVFSELYEASKQTANPWVFEPEYPGKSRIFDGRTGDPFEQPVIIGKPYILKLIHQVDDKIHGRSSGHYALVTQQPLRGRSKQGGQRVGEMEVWALEGFGVAHILQEMLTYKSDHIRARQEVLGTTIIGGTIPKPEDAPESFRLLVRELRSLALELNHFLVSEKNFQINRKEV.

Belongs to the RNA polymerase beta chain family. In terms of assembly, in plastids the minimal PEP RNA polymerase catalytic core is composed of four subunits: alpha, beta, beta', and beta''. When a (nuclear-encoded) sigma factor is associated with the core the holoenzyme is formed, which can initiate transcription.

It localises to the plastid. The protein resides in the chloroplast. It catalyses the reaction RNA(n) + a ribonucleoside 5'-triphosphate = RNA(n+1) + diphosphate. Functionally, DNA-dependent RNA polymerase catalyzes the transcription of DNA into RNA using the four ribonucleoside triphosphates as substrates. This is DNA-directed RNA polymerase subunit beta from Barbarea verna (Land cress).